The sequence spans 325 residues: MTASQPLDQADQDSESSSAGSSAAETEHVSVMPNEIVQWVREINPTTIIDGTYGGGGHTRLLAEVLADAGSDSDTPRVIAIDRDPAVVRRDEQKSWIKDDPRIELFLGSYESSPKALDALDLTHADALVLDLGLSSDQLADRNRGFTFTIDDAELDLRFDPENGVPAHRWLQQHSEKEIADAIYRFGEERFSRRIAKQIFLRARERNPVTKVGELVEICRRCVPRSRNHDIHPATRTFQALRIAVNDELGGLTRTLQSAPDWIAPGGRVAVISFHSLEDRIVKNAFREDHRWEILTKKPLRPTDEEVQANPRSRSAKLRVAKRVE.

The disordered stretch occupies residues 1 to 28 (MTASQPLDQADQDSESSSAGSSAAETEH). Residues 15–24 (ESSSAGSSAA) show a composition bias toward low complexity. S-adenosyl-L-methionine is bound by residues 56-58 (GGH), aspartate 82, tyrosine 110, aspartate 131, and glutamine 138. Positions 303–325 (TDEEVQANPRSRSAKLRVAKRVE) are disordered. The segment covering 314 to 325 (RSAKLRVAKRVE) has biased composition (basic residues).

This sequence belongs to the methyltransferase superfamily. RsmH family.

The protein localises to the cytoplasm. It catalyses the reaction cytidine(1402) in 16S rRNA + S-adenosyl-L-methionine = N(4)-methylcytidine(1402) in 16S rRNA + S-adenosyl-L-homocysteine + H(+). In terms of biological role, specifically methylates the N4 position of cytidine in position 1402 (C1402) of 16S rRNA. This chain is Ribosomal RNA small subunit methyltransferase H, found in Rhodopirellula baltica (strain DSM 10527 / NCIMB 13988 / SH1).